We begin with the raw amino-acid sequence, 478 residues long: Catalase easC (478 aa).

His54 is a catalytic residue. Position 343 (Tyr343) interacts with heme. Residues 459–478 (VAEKARPDSPSRAQPGQLRL) are disordered.

It belongs to the catalase family. Heme is required as a cofactor.

It functions in the pathway alkaloid biosynthesis; ergot alkaloid biosynthesis. Functionally, catalase; part of the gene cluster that mediates the biosynthesis of fungal ergot alkaloid. DmaW catalyzes the first step of ergot alkaloid biosynthesis by condensing dimethylallyl diphosphate (DMAP) and tryptophan to form 4-dimethylallyl-L-tryptophan. The second step is catalyzed by the methyltransferase easF that methylates 4-dimethylallyl-L-tryptophan in the presence of S-adenosyl-L-methionine, resulting in the formation of 4-dimethylallyl-L-abrine. The catalase easC and the FAD-dependent oxidoreductase easE then transform 4-dimethylallyl-L-abrine to chanoclavine-I which is further oxidized by easD in the presence of NAD(+), resulting in the formation of chanoclavine-I aldehyde. Chanoclavine-I aldehyde is the precursor of ergoamides and ergopeptines in Clavicipitaceae, and clavine-type alcaloids such as fumiclavine in Trichocomaceae. However, the metabolites downstream of chanoclavine-I aldehyde in Arthrodermataceae have not been identified yet. This is Catalase easC from Trichophyton verrucosum (strain HKI 0517).